The sequence spans 524 residues: Adhesion G-protein coupled receptor G5 (524 aa).

The signal sequence occupies residues Met-1 to Thr-23. Residues Leu-24 to Tyr-246 are Extracellular-facing. N-linked (GlcNAc...) asparagine glycans are attached at residues Asn-58, Asn-65, Asn-96, Asn-143, Asn-169, and Asn-175. Positions Gln-74–Pro-235 constitute a GAIN-B domain. 2 cysteine pairs are disulfide-bonded: Cys-185–Cys-217 and Cys-205–Cys-219. The tract at residues Cys-185–Pro-235 is GPS. Residues Tyr-224–Ser-232 form a stachel region. A helical transmembrane segment spans residues Ile-247–Ala-267. Over Gln-268–Asn-284 the chain is Cytoplasmic. Residues Gly-285–Met-305 form a helical membrane-spanning segment. Residues Pro-306 to Tyr-319 are Extracellular-facing. Cys-310 and Cys-400 form a disulfide bridge. A helical transmembrane segment spans residues Ala-320–Gly-340. Residues Arg-341 to Leu-351 are Cytoplasmic-facing. A helical transmembrane segment spans residues Leu-352–Ile-372. Residues Lys-373–Met-413 lie on the Extracellular side of the membrane. Residues Asn-390 and Asn-396 are each glycosylated (N-linked (GlcNAc...) asparagine). A helical transmembrane segment spans residues Gly-414–Leu-434. The Cytoplasmic portion of the chain corresponds to Cys-435–Ala-453. A helical transmembrane segment spans residues Met-454–Phe-476. Topologically, residues Leu-477–Gln-480 are extracellular. A helical membrane pass occupies residues Leu-481 to Cys-500. Residues Ser-501–His-524 lie on the Cytoplasmic side of the membrane.

Belongs to the G-protein coupled receptor 2 family. Adhesion G-protein coupled receptor (ADGR) subfamily. Heterodimer of 2 chains generated by proteolytic processing; the large extracellular N-terminal fragment and the membrane-bound C-terminal fragment predominantly remain associated and non-covalently linked. Post-translationally, autoproteolytically processed at the GPS region of the GAIN-B domain; this cleavage modulates receptor activity. In terms of tissue distribution, expressed at least in kidney, heart, brain and spleen. Isoform 1 is predominant in spleen. In the kidney, both isoform 1 and isoform 2 are expressed at similar levels. As to expression, isoform 2 is the major form in heart and brain. In the kidney, both isoform 1 and isoform 2 are expressed at similar levels.

The protein resides in the cell membrane. Forms a heterodimer of 2 chains generated by proteolytic processing that remain associated through non-covalent interactions mediated by the GAIN-B domain. In the inactivated receptor, the Stachel sequence (also named stalk) is embedded in the GAIN-B domain, where it adopts a beta-strand conformation. On activation, the Stachel moves into the 7 transmembrane region and adopts a twisted hook-shaped configuration that forms contacts within the receptor, leading to coupling of a G-alpha protein, which activates signaling. The cleaved GAIN-B and N-terminal domains can then dissociate from the rest of the receptor. In terms of biological role, orphan adhesion G-protein coupled receptor (aGPCR). Ligand binding causes a conformation change that triggers signaling via guanine nucleotide-binding proteins (G proteins) and modulates the activity of downstream effectors, such as adenylate cyclase. ADGRG5 is specifically coupled to G(s) G proteins and mediates activation of adenylate cyclase activity. Isoform 1, but not isoform 2, is constitutively active, as evidenced by elevated basal cAMP levels, and responds to mechanical activation (shaking). This Mus musculus (Mouse) protein is Adhesion G-protein coupled receptor G5.